The following is a 421-amino-acid chain: Phosphoglycerate kinase (421 aa).

(2R)-3-phosphoglycerate is bound by residues V23, D24, F25, N26, Q41, R42, S65, H66, G68, R69, L124, R125, H172, and R173. G216 contacts ADP. Residue G216 coordinates CDP. K218 provides a ligand contact to AMP. A CDP-binding site is contributed by D221. Position 221 (D221) interacts with Mg(2+). K222 lines the AMP pocket. K222 is a binding site for ATP. G240 serves as a coordination point for ADP. Residue G240 coordinates CDP. AMP contacts are provided by G241 and G315. Residues G241 and G315 each coordinate ATP. CDP contacts are provided by G340 and F345. F345 contributes to the ADP binding site. Residue E346 participates in AMP binding. Residues E346, D377, and T378 each contribute to the ATP site. D377 contacts Mg(2+).

Belongs to the phosphoglycerate kinase family. Monomer. It depends on Mg(2+) as a cofactor.

Its subcellular location is the cytoplasm. It localises to the mitochondrion. The catalysed reaction is (2R)-3-phosphoglycerate + ATP = (2R)-3-phospho-glyceroyl phosphate + ADP. It participates in carbohydrate degradation; glycolysis; pyruvate from D-glyceraldehyde 3-phosphate: step 2/5. Catalyzes one of the two ATP producing reactions in the glycolytic pathway via the reversible conversion of 1,3-diphosphoglycerate to 3-phosphoglycerate. Both L- and D- forms of purine and pyrimidine nucleotides can be used as substrates, but the activity is much lower on pyrimidines. Negatively regulates the biosynthesis of acetyl-CoA from pyruvate in the mitochondrion. This is Phosphoglycerate kinase (pgkA) from Emericella nidulans (strain FGSC A4 / ATCC 38163 / CBS 112.46 / NRRL 194 / M139) (Aspergillus nidulans).